Consider the following 511-residue polypeptide: D-alanine--D-alanyl carrier protein ligase (511 aa).

152-153 (TS) is a binding site for ATP. Aspartate 199 is a binding site for D-alanine. 294-299 (NAYGPT) is a binding site for ATP. Valine 303 contacts D-alanine. Residues aspartate 385, 397-400 (YGGR), and lysine 499 contribute to the ATP site. Lysine 499 is a binding site for D-alanine.

Belongs to the ATP-dependent AMP-binding enzyme family. DltA subfamily.

It is found in the cytoplasm. The catalysed reaction is holo-[D-alanyl-carrier protein] + D-alanine + ATP = D-alanyl-[D-alanyl-carrier protein] + AMP + diphosphate. It functions in the pathway cell wall biogenesis; lipoteichoic acid biosynthesis. Catalyzes the first step in the D-alanylation of lipoteichoic acid (LTA), the activation of D-alanine and its transfer onto the D-alanyl carrier protein (Dcp) DltC. In an ATP-dependent two-step reaction, forms a high energy D-alanyl-AMP intermediate, followed by transfer of the D-alanyl residue as a thiol ester to the phosphopantheinyl prosthetic group of the Dcp. D-alanylation of LTA plays an important role in modulating the properties of the cell wall in Gram-positive bacteria, influencing the net charge of the cell wall. This is D-alanine--D-alanyl carrier protein ligase from Streptococcus agalactiae serotype V (strain ATCC BAA-611 / 2603 V/R).